A 457-amino-acid chain; its full sequence is Adenylyltransferase and sulfurtransferase MOCS3 (457 aa).

A disordered region spans residues Ala40–Thr60. Phosphothreonine is present on Thr63. ATP is bound by residues Gly102, Asp123, Ser130–Arg134, Lys147, and Asp191–Asn192. Residues Cys233 and Cys236 each coordinate Zn(2+). The active-site Glycyl thioester intermediate; for adenylyltransferase activity is the Cys250. Cys309 and Cys312 together coordinate Zn(2+). One can recognise a Rhodanese domain in the interval Glu358–Pro455. The active-site Cysteine persulfide intermediate; for sulfurtransferase activity is Cys414.

The protein in the N-terminal section; belongs to the HesA/MoeB/ThiF family. UBA4 subfamily. Zn(2+) serves as cofactor.

Its subcellular location is the cytoplasm. The protein resides in the cytosol. The enzyme catalyses [molybdopterin-synthase sulfur-carrier protein]-C-terminal Gly-Gly + ATP + H(+) = [molybdopterin-synthase sulfur-carrier protein]-C-terminal Gly-Gly-AMP + diphosphate. It catalyses the reaction [molybdopterin-synthase sulfur-carrier protein]-C-terminal Gly-Gly-AMP + S-sulfanyl-L-cysteinyl-[cysteine desulfurase] + AH2 = [molybdopterin-synthase sulfur-carrier protein]-C-terminal-Gly-aminoethanethioate + L-cysteinyl-[cysteine desulfurase] + A + AMP + 2 H(+). It functions in the pathway tRNA modification; 5-methoxycarbonylmethyl-2-thiouridine-tRNA biosynthesis. The protein operates within cofactor biosynthesis; molybdopterin biosynthesis. Its function is as follows. Plays a central role in 2-thiolation of mcm(5)S(2)U at tRNA wobble positions of cytosolic tRNA(Lys), tRNA(Glu) and tRNA(Gln). Also essential during biosynthesis of the molybdenum cofactor. Acts by mediating the C-terminal thiocarboxylation of sulfur carriers URM1 and MOCS2A. Its N-terminus first activates URM1 and MOCS2A as acyl-adenylates (-COAMP), then the persulfide sulfur on the catalytic cysteine is transferred to URM1 and MOCS2A to form thiocarboxylation (-COSH) of their C-terminus. The reaction probably involves hydrogen sulfide that is generated from the persulfide intermediate and that acts as a nucleophile towards URM1 and MOCS2A. Subsequently, a transient disulfide bond is formed. Does not use thiosulfate as sulfur donor; NFS1 probably acting as a sulfur donor for thiocarboxylation reactions. The chain is Adenylyltransferase and sulfurtransferase MOCS3 from Drosophila willistoni (Fruit fly).